The sequence spans 209 residues: Uracil phosphoribosyltransferase (209 aa).

Residues Arg-79, Arg-104, and 131–139 (DPMLATGHT) each bind 5-phospho-alpha-D-ribose 1-diphosphate. Uracil is bound by residues Ile-194 and 199-201 (GDA). Residue Asp-200 coordinates 5-phospho-alpha-D-ribose 1-diphosphate.

This sequence belongs to the UPRTase family. Mg(2+) serves as cofactor.

It catalyses the reaction UMP + diphosphate = 5-phospho-alpha-D-ribose 1-diphosphate + uracil. It functions in the pathway pyrimidine metabolism; UMP biosynthesis via salvage pathway; UMP from uracil: step 1/1. With respect to regulation, allosterically activated by GTP. Catalyzes the conversion of uracil and 5-phospho-alpha-D-ribose 1-diphosphate (PRPP) to UMP and diphosphate. In Caulobacter sp. (strain K31), this protein is Uracil phosphoribosyltransferase.